Consider the following 105-residue polypeptide: Nucleoid-associated protein Sca_0120 (105 aa).

A disordered region spans residues 1–36; it reads MRGGGNMQQMMKQMQKMQKKMAEEQEKLKDEKVEGS. Residues 7 to 16 are compositionally biased toward low complexity; that stretch reads MQQMMKQMQK. The segment covering 20–34 has biased composition (basic and acidic residues); it reads KMAEEQEKLKDEKVE.

The protein belongs to the YbaB/EbfC family. Homodimer.

Its subcellular location is the cytoplasm. The protein localises to the nucleoid. In terms of biological role, binds to DNA and alters its conformation. May be involved in regulation of gene expression, nucleoid organization and DNA protection. The chain is Nucleoid-associated protein Sca_0120 from Staphylococcus carnosus (strain TM300).